We begin with the raw amino-acid sequence, 625 residues long: Probable potassium transport system protein Kup (625 aa).

Transmembrane regions (helical) follow at residues 10–30 (LAAL…TSPL), 50–70 (LLGV…LKYV), 102–122 (YFPL…DSVI), 142–162 (FDPY…SVQA), 172–192 (FGPI…VNII), 215–235 (FLAF…EALY), 250–270 (WFLV…ALLL), 284–304 (LGAW…IIAS), 340–360 (IYIP…VVGF), 369–389 (AYGI…FFVI), 397–417 (LLLC…LFSA), and 422–442 (LFHG…LMLT).

It belongs to the HAK/KUP transporter (TC 2.A.72) family.

Its subcellular location is the cell inner membrane. It carries out the reaction K(+)(in) + H(+)(in) = K(+)(out) + H(+)(out). In terms of biological role, transport of potassium into the cell. Likely operates as a K(+):H(+) symporter. The chain is Probable potassium transport system protein Kup from Janthinobacterium sp. (strain Marseille) (Minibacterium massiliensis).